Here is a 373-residue protein sequence, read N- to C-terminus: Beta sliding clamp (373 aa).

It belongs to the beta sliding clamp family. Forms a ring-shaped head-to-tail homodimer around DNA which binds and tethers DNA polymerases and other proteins to the DNA. The DNA replisome complex has a single clamp-loading complex (3 tau and 1 each of delta, delta', psi and chi subunits) which binds 3 Pol III cores (1 core on the leading strand and 2 on the lagging strand) each with a beta sliding clamp dimer. Additional proteins in the replisome are other copies of gamma, psi and chi, Ssb, DNA helicase and RNA primase.

Its subcellular location is the cytoplasm. Functionally, confers DNA tethering and processivity to DNA polymerases and other proteins. Acts as a clamp, forming a ring around DNA (a reaction catalyzed by the clamp-loading complex) which diffuses in an ATP-independent manner freely and bidirectionally along dsDNA. Initially characterized for its ability to contact the catalytic subunit of DNA polymerase III (Pol III), a complex, multichain enzyme responsible for most of the replicative synthesis in bacteria; Pol III exhibits 3'-5' exonuclease proofreading activity. The beta chain is required for initiation of replication as well as for processivity of DNA replication. In Mycoplasmopsis pulmonis (strain UAB CTIP) (Mycoplasma pulmonis), this protein is Beta sliding clamp (dnaN).